The chain runs to 297 residues: MAETPFHIPVLVNECLSWFSDRNPRSFCDVTVGAGGHAEAFLSTYPSIISYDGSDRDATALSLARERLEKFGDRVHLHHASFEDLAQDPKENVYDGILADLGVSSMQLDTLSRGFSFQGEDHDLDMRMDTSQGITASEVLNTLREEELGKIFREYGEEPHWKNVANAIVHFRRRKKIITVKDLKEATARVFPSYRLRKKIHPLTLIFQALRVYVNQEDVQLKVLLESAMRWLAPKGRLVIISFCSSEDRPVKWFFREAEKSGLGKILTKKVVMPTYEEIRRNPRCRSAKLRCFEKTS.

S-adenosyl-L-methionine-binding positions include G35–H37, D55, F82, D100, and Q107.

The protein belongs to the methyltransferase superfamily. RsmH family.

Its subcellular location is the cytoplasm. It catalyses the reaction cytidine(1402) in 16S rRNA + S-adenosyl-L-methionine = N(4)-methylcytidine(1402) in 16S rRNA + S-adenosyl-L-homocysteine + H(+). Functionally, specifically methylates the N4 position of cytidine in position 1402 (C1402) of 16S rRNA. The chain is Ribosomal RNA small subunit methyltransferase H from Chlamydia caviae (strain ATCC VR-813 / DSM 19441 / 03DC25 / GPIC) (Chlamydophila caviae).